The primary structure comprises 207 residues: Large ribosomal subunit protein uL4 (207 aa).

It belongs to the universal ribosomal protein uL4 family. In terms of assembly, part of the 50S ribosomal subunit.

Its function is as follows. One of the primary rRNA binding proteins, this protein initially binds near the 5'-end of the 23S rRNA. It is important during the early stages of 50S assembly. It makes multiple contacts with different domains of the 23S rRNA in the assembled 50S subunit and ribosome. In terms of biological role, forms part of the polypeptide exit tunnel. The polypeptide is Large ribosomal subunit protein uL4 (Rickettsia africae (strain ESF-5)).